The following is a 718-amino-acid chain: Heat shock 70 kDa protein 7, chloroplastic (718 aa).

Residues 1 to 92 (MASSAAQIHI…IDLGTTNSAV (92 aa)) constitute a chloroplast transit peptide. Positions 668–678 (QIGQSLYNQPQ) are enriched in polar residues. The interval 668 to 718 (QIGQSLYNQPQPGGADSPPGGEASSSSDTSSSAKGGDNGGDVIDADFTDSN) is disordered.

It belongs to the heat shock protein 70 (TC 1.A.33) family. DnaK subfamily.

The protein localises to the plastid. The protein resides in the chloroplast stroma. In terms of biological role, acts redundantly with HSP70-6 in the thermotolerance of germinating seeds. Plays an important role in the protein precursor import into chloroplasts. Functionally, in cooperation with other chaperones, Hsp70s are key components that facilitate folding of de novo synthesized proteins, assist translocation of precursor proteins into organelles, and are responsible for degradation of damaged protein under stress conditions. In Arabidopsis thaliana (Mouse-ear cress), this protein is Heat shock 70 kDa protein 7, chloroplastic (HSP70-7).